The primary structure comprises 178 residues: MHSSALLCCLVFLTGVRASPGQGTQSENSCTHFPGSLPHMLRELRVAFSRVKTFFQKKDQLDSMLLKESLLEDFKGYLGCQALSEMIQFYLEEVMPQAENHDPDIKEHVNSLGEKLKTFRLRLRRCHRFLPCENKSKAVVQVKNAVSKLQEKGIYKAMSEFDIFIDYIEAYMTMKAQN.

The first 18 residues, 1–18, serve as a signal peptide directing secretion; that stretch reads MHSSALLCCLVFLTGVRA. Disulfide bonds link C30–C126 and C80–C132. A glycan (N-linked (GlcNAc...) asparagine) is linked at N134.

It belongs to the IL-10 family. Homodimer. Interacts with IL10RA and IL10RB.

The protein localises to the secreted. Major immune regulatory cytokine that acts on many cells of the immune system where it has profound anti-inflammatory functions, limiting excessive tissue disruption caused by inflammation. Mechanistically, IL10 binds to its heterotetrameric receptor comprising IL10RA and IL10RB leading to JAK1 and STAT2-mediated phosphorylation of STAT3. In turn, STAT3 translocates to the nucleus where it drives expression of anti-inflammatory mediators. Targets antigen-presenting cells (APCs) such as macrophages and monocytes and inhibits their release of pro-inflammatory cytokines including granulocyte-macrophage colony-stimulating factor /GM-CSF, granulocyte colony-stimulating factor/G-CSF, IL-1 alpha, IL-1 beta, IL-6, IL-8 and TNF-alpha. Also interferes with antigen presentation by reducing the expression of MHC-class II and co-stimulatory molecules, thereby inhibiting their ability to induce T cell activation. In addition, controls the inflammatory response of macrophages by reprogramming essential metabolic pathways including mTOR signaling. In Callithrix jacchus (White-tufted-ear marmoset), this protein is Interleukin-10 (IL10).